Consider the following 124-residue polypeptide: Protein YobA (124 aa).

The first 26 residues, 1–26 (MASTARSLRYALAILTTSLVTPSVWA), serve as a signal peptide directing secretion. Cu cation is bound by residues His27 and His113.

The protein belongs to the CopC family.

The protein localises to the periplasm. The sequence is that of Protein YobA (yobA) from Escherichia coli O6:H1 (strain CFT073 / ATCC 700928 / UPEC).